Here is a 450-residue protein sequence, read N- to C-terminus: MGKYFGTDGVRGVANSELTPELAFRLGRMGGYVLTRHVGEHPRVLVARDTRISGEMLESALIAGLVSVGIEVMRLGVISTPGVAYLTKAQGASASVMISASHNPVDDNGIKFFGSDGFKLSDDQEEEIEQLLDTAEDTLPRPSGEGLGTVSDYFEGKQKYIQYLKQTIENDFNGYHIALDCANGATSGLATHLFADLDADISSMGASPNGLNINDGVGSTHPEALAAFVLDKKADVGLAFDGDGDRVIAIDEIGQIVDGDKIMFICAKYLREQGLLNNNTIVSTVMSNLGFYKGLKELEIEDVQTAVGDRYVVEAMREGNYNLGGEQSGHIIFLDHNTTGDGLLSGIQLINVMKATGKKLSELAAEMKTFPQKLENIRVSDKNHVTDNPKVSKVIDEVEAEMAGNGRVLVRPSGTEPLVRVMVEAATKEETDEYCERISAVVRSEMALND.

Residue S101 is the Phosphoserine intermediate of the active site. Residues S101, D241, D243, and D245 each contribute to the Mg(2+) site. S101 carries the post-translational modification Phosphoserine.

It belongs to the phosphohexose mutase family. It depends on Mg(2+) as a cofactor. Activated by phosphorylation.

The enzyme catalyses alpha-D-glucosamine 1-phosphate = D-glucosamine 6-phosphate. Functionally, catalyzes the conversion of glucosamine-6-phosphate to glucosamine-1-phosphate. The polypeptide is Phosphoglucosamine mutase (Listeria monocytogenes serovar 1/2a (strain ATCC BAA-679 / EGD-e)).